Reading from the N-terminus, the 466-residue chain is Argininosuccinate lyase 1 (466 aa).

This sequence belongs to the lyase 1 family. Argininosuccinate lyase subfamily.

The protein localises to the cytoplasm. The enzyme catalyses 2-(N(omega)-L-arginino)succinate = fumarate + L-arginine. It functions in the pathway amino-acid biosynthesis; L-arginine biosynthesis; L-arginine from L-ornithine and carbamoyl phosphate: step 3/3. In Mesorhizobium japonicum (strain LMG 29417 / CECT 9101 / MAFF 303099) (Mesorhizobium loti (strain MAFF 303099)), this protein is Argininosuccinate lyase 1.